Reading from the N-terminus, the 87-residue chain is uncharacterized protein (87 aa).

This is an uncharacterized protein from Autographa californica nuclear polyhedrosis virus (AcMNPV).